The chain runs to 186 residues: Akirin-1 (186 aa).

The segment at 1–64 is disordered; the sequence is MACGATLKRS…PLPQLGGDRR (64 aa). The Nuclear localization signal signature appears at 22-27; that stretch reads PKRRRC. A compositionally biased stretch (low complexity) spans 49-60; the sequence is QQGQQQPLPQLG. An SYVS motif motif is present at residues 183–186; the sequence is SYVS.

The protein belongs to the akirin family.

Its subcellular location is the nucleus. Functionally, molecular adapter that acts as a bridge between proteins, and which is involved skeletal muscle development. Functions as a signal transducer for MSTN during skeletal muscle regeneration and myogenesis. This Xenopus tropicalis (Western clawed frog) protein is Akirin-1.